The sequence spans 118 residues: Small ribosomal subunit protein uS13 (118 aa).

Residues 91–118 (HRRSLPLRGQRTKNNARTRKGPKKPIKR) form a disordered region.

Belongs to the universal ribosomal protein uS13 family. As to quaternary structure, part of the 30S ribosomal subunit. Forms a loose heterodimer with protein S19. Forms two bridges to the 50S subunit in the 70S ribosome.

Functionally, located at the top of the head of the 30S subunit, it contacts several helices of the 16S rRNA. In the 70S ribosome it contacts the 23S rRNA (bridge B1a) and protein L5 of the 50S subunit (bridge B1b), connecting the 2 subunits; these bridges are implicated in subunit movement. Contacts the tRNAs in the A and P-sites. This chain is Small ribosomal subunit protein uS13, found in Hydrogenovibrio crunogenus (strain DSM 25203 / XCL-2) (Thiomicrospira crunogena).